Here is an 885-residue protein sequence, read N- to C-terminus: 3-hydroxy-3-methylglutaryl-coenzyme A reductase (885 aa).

The Cytoplasmic portion of the chain corresponds to 1-9; it reads MLSRLFRMH. A helical membrane pass occupies residues 10–39; the sequence is GLFVASHPWEVIVGTVTLTICMMSMNMFTG. Topologically, residues 40-56 are lumenal; sequence NDKICGWNYECPKFEED. A helical transmembrane segment spans residues 57-78; it reads VLSSDIIILTITRCIAILYIYF. The SSD domain maps to 61-218; sequence DIIILTITRC…MTFFPACVSL (158 aa). The short motif at 75–78 is the INSIG-binding motif element; it reads YIYF. Residues 79-89 lie on the Cytoplasmic side of the membrane; the sequence is QFQNLRQLGSK. A Glycyl lysine isopeptide (Lys-Gly) (interchain with G-Cter in ubiquitin) cross-link involves residue lysine 89. A helical membrane pass occupies residues 90–114; sequence YILGIAGLFTIFSSFVFSTVVIHFL. At 115-123 the chain is on the lumenal side; sequence DKELTGLNE. The helical transmembrane segment at 124-149 threads the bilayer; it reads ALPFFLLLIDLSRASALAKFALSSNS. Topologically, residues 150–159 are cytoplasmic; sequence QDEVRENIAR. A helical transmembrane segment spans residues 160–187; the sequence is GMAILGPTFTLDALVECLVIGVGTMSGV. Residues 188–191 lie on the Lumenal side of the membrane; sequence RQLE. The helical transmembrane segment at 192-220 threads the bilayer; the sequence is IMCCFGCMSVLATYFVFMTFFPACVSLVL. Topologically, residues 221-248 are cytoplasmic; the sequence is ELSRESREGRPIWQLSHFARVLEGEENK. A Glycyl lysine isopeptide (Lys-Gly) (interchain with G-Cter in ubiquitin) cross-link involves residue lysine 248. A helical transmembrane segment spans residues 249 to 275; that stretch reads PNPVTQRVKIIMSLGLVLVHAHSRWIA. Residues 276-314 lie on the Lumenal side of the membrane; sequence DPSPQNSTADNSKVSLGLDENVSKRIEPSVSLWQFYLSK. Asparagine 281 and asparagine 296 each carry an N-linked (GlcNAc...) asparagine glycan. The helical transmembrane segment at 315–339 threads the bilayer; sequence MISMDIEQVITLTLALLLAVKYIFF. The Cytoplasmic segment spans residues 340-885; that stretch reads EQAETESTLS…LQGTCTKKAA (546 aa). Active-site charge relay system residues include glutamate 558, lysine 688, and aspartate 764. Residue histidine 863 is the Proton donor of the active site. Residue serine 869 is modified to Phosphoserine; by AMPK.

The protein belongs to the HMG-CoA reductase family. Homotetramer. Homodimer. Interacts (via its SSD) with INSIG1; the interaction, accelerated by sterols, leads to the recruitment of HMGCR to AMFR/gp78 for its ubiquitination by the sterol-mediated ERAD pathway. Interacts with UBIAD1. Undergoes sterol-mediated ubiquitination and ER-associated degradation (ERAD). Accumulation of sterols in the endoplasmic reticulum (ER) membrane, triggers binding of the reductase to the ER membrane protein INSIG1 or INSIG2. The INSIG1 binding leads to the recruitment of the ubiquitin ligase, AMFR/gp78, RNF139 or RNF145, initiating ubiquitination of the reductase. The ubiquitinated reductase is then extracted from the ER membrane and delivered to cytosolic 26S proteosomes by a mechanism probably mediated by the ATPase Valosin-containing protein VCP/p97. The INSIG2-binding leads to the recruitment of the ubiquitin ligase RNF139, initiating ubiquitination of the reductase. Lys-248 is the main site of ubiquitination. Ubiquitination is enhanced by the presence of a geranylgeranylated protein. In terms of processing, N-glycosylated. Deglycosylated by NGLY1 on release from the endoplasmic reticulum (ER) in a sterol-mediated manner. Post-translationally, phosphorylated. Phosphorylation at Ser-869 reduces the catalytic activity. High expression found in liver, heart, kidney, bladder and subcutaneous fat. Lower levels in lung, uterus and large intestine. Lowest levels in cerebrum, spleen, spinal cord, stomach, ovary, longissimus muscle, and small intestine.

It is found in the endoplasmic reticulum membrane. It localises to the peroxisome membrane. It carries out the reaction (R)-mevalonate + 2 NADP(+) + CoA = (3S)-3-hydroxy-3-methylglutaryl-CoA + 2 NADPH + 2 H(+). The protein operates within metabolic intermediate biosynthesis; (R)-mevalonate biosynthesis; (R)-mevalonate from acetyl-CoA: step 3/3. Regulated by a negative feedback mechanism through sterols and non-sterol metabolites derived from mevalonate. Phosphorylation at Ser-869 down-regulates the catalytic activity. In terms of biological role, catalyzes the conversion of (3S)-hydroxy-3-methylglutaryl-CoA (HMG-CoA) to mevalonic acid, the rate-limiting step in the synthesis of cholesterol and other isoprenoids, thus plays a critical role in cellular cholesterol homeostasis. The sequence is that of 3-hydroxy-3-methylglutaryl-coenzyme A reductase (HMGCR) from Sus scrofa (Pig).